The sequence spans 355 residues: Ubiquinone biosynthesis protein COQ4 homolog, mitochondrial (355 aa).

The Zn(2+) site is built by histidine 134, aspartate 135, histidine 138, and glutamate 150.

This sequence belongs to the COQ4 family. In terms of assembly, component of a multi-subunit COQ enzyme complex. Zn(2+) is required as a cofactor.

It localises to the mitochondrion inner membrane. It carries out the reaction a 4-hydroxy-3-methoxy-5-(all-trans-polyprenyl)benzoate + H(+) = a 2-methoxy-6-(all-trans-polyprenyl)phenol + CO2. Its pathway is cofactor biosynthesis; ubiquinone biosynthesis. Its function is as follows. Lyase that catalyzes the C1-decarboxylation of 4-hydroxy-3-methoxy-5-(all-trans-polyprenyl)benzoic acid into 2-methoxy-6-(all-trans-polyprenyl)phenol during ubiquinone biosynthesis. In Plasmodium falciparum (isolate 3D7), this protein is Ubiquinone biosynthesis protein COQ4 homolog, mitochondrial.